A 250-amino-acid chain; its full sequence is 5-oxoprolinase subunit A (250 aa).

It belongs to the LamB/PxpA family. Forms a complex composed of PxpA, PxpB and PxpC.

It catalyses the reaction 5-oxo-L-proline + ATP + 2 H2O = L-glutamate + ADP + phosphate + H(+). Catalyzes the cleavage of 5-oxoproline to form L-glutamate coupled to the hydrolysis of ATP to ADP and inorganic phosphate. The protein is 5-oxoprolinase subunit A of Thermus thermophilus (strain ATCC BAA-163 / DSM 7039 / HB27).